The chain runs to 222 residues: Charged multivesicular body protein 4b (222 aa).

Disordered regions lie at residues 1-21 (MSLIGKLFGTGGKGAKGPSPQ) and 177-222 (NLLE…WATA). Residues 21–182 (QEAIQKLRDT…ELDKNLLEVQ (162 aa)) adopt a coiled-coil conformation.

Belongs to the SNF7 family. Probable core component of the endosomal sorting required for transport complex III (ESCRT-III). ESCRT-III components are thought to multimerize to form a flat lattice on the perimeter membrane of the endosome.

It is found in the cytoplasm. Its subcellular location is the cytosol. It localises to the late endosome membrane. The protein resides in the midbody. In terms of biological role, probable core component of the endosomal sorting required for transport complex III (ESCRT-III) which is involved in multivesicular bodies (MVBs) formation and sorting of endosomal cargo proteins into MVBs. MVBs contain intraluminal vesicles (ILVs) that are generated by invagination and scission from the limiting membrane of the endosome and mostly are delivered to lysosomes enabling degradation of membrane proteins, such as stimulated growth factor receptors, lysosomal enzymes and lipids. In Xenopus laevis (African clawed frog), this protein is Charged multivesicular body protein 4b (chmp4b).